A 95-amino-acid polypeptide reads, in one-letter code: Small ribosomal subunit protein uS19 (95 aa).

Belongs to the universal ribosomal protein uS19 family.

Protein S19 forms a complex with S13 that binds strongly to the 16S ribosomal RNA. The polypeptide is Small ribosomal subunit protein uS19 (Chloroflexus aggregans (strain MD-66 / DSM 9485)).